Reading from the N-terminus, the 216-residue chain is Sporozoite antigen (216 aa).

The segment at 194–216 (QQQQPSSYGAPPASSQQPSGFFW) is disordered.

The polypeptide is Sporozoite antigen (Eimeria tenella (Coccidian parasite)).